The primary structure comprises 236 residues: MRLAVNIDHIATLRNARGEQEPDPVAAALLAEKCGAAGIVCHLREDRRHINDHDLARLREAVTTKLDLEMAMTPELQQIALKTRPELITLVPEKREELTTEGGFDIVRHYAVLAAYLKPFNAAGIEVSLFIEPEKKAIDLAKQAGADLVELHTGLYALKKEGEAQSKELQRIREAAIHARSLGLKVVAGHGLNYLNIAPFREIEEIEEVSIGHAIIARAVLTGLEEAIREMLRIIK.

Residue Asn-6 coordinates 3-amino-2-oxopropyl phosphate. Residue 8 to 9 participates in 1-deoxy-D-xylulose 5-phosphate binding; sequence DH. Arg-17 is a binding site for 3-amino-2-oxopropyl phosphate. The active-site Proton acceptor is His-42. 1-deoxy-D-xylulose 5-phosphate is bound by residues Arg-44 and His-49. Glu-69 serves as the catalytic Proton acceptor. Thr-99 is a 1-deoxy-D-xylulose 5-phosphate binding site. His-190 functions as the Proton donor in the catalytic mechanism. 3-amino-2-oxopropyl phosphate is bound by residues Gly-191 and 212-213; that span reads GH.

Belongs to the PNP synthase family. In terms of assembly, homooctamer; tetramer of dimers.

The protein localises to the cytoplasm. It catalyses the reaction 3-amino-2-oxopropyl phosphate + 1-deoxy-D-xylulose 5-phosphate = pyridoxine 5'-phosphate + phosphate + 2 H2O + H(+). Its pathway is cofactor biosynthesis; pyridoxine 5'-phosphate biosynthesis; pyridoxine 5'-phosphate from D-erythrose 4-phosphate: step 5/5. Catalyzes the complicated ring closure reaction between the two acyclic compounds 1-deoxy-D-xylulose-5-phosphate (DXP) and 3-amino-2-oxopropyl phosphate (1-amino-acetone-3-phosphate or AAP) to form pyridoxine 5'-phosphate (PNP) and inorganic phosphate. The chain is Pyridoxine 5'-phosphate synthase from Pelodictyon phaeoclathratiforme (strain DSM 5477 / BU-1).